The chain runs to 365 residues: N5-carboxyaminoimidazole ribonucleotide synthase (365 aa).

Residues Arg102, Lys143, 148-154 (GYDGKGQ), 177-180 (EEYV), Glu185, and 256-257 (NE) contribute to the ATP site. The 181-residue stretch at 106–286 (KLFYRQHNLP…QFEQHLRAII (181 aa)) folds into the ATP-grasp domain.

Belongs to the PurK/PurT family. In terms of assembly, homodimer.

It catalyses the reaction 5-amino-1-(5-phospho-beta-D-ribosyl)imidazole + hydrogencarbonate + ATP = 5-carboxyamino-1-(5-phospho-D-ribosyl)imidazole + ADP + phosphate + 2 H(+). Its pathway is purine metabolism; IMP biosynthesis via de novo pathway; 5-amino-1-(5-phospho-D-ribosyl)imidazole-4-carboxylate from 5-amino-1-(5-phospho-D-ribosyl)imidazole (N5-CAIR route): step 1/2. In terms of biological role, catalyzes the ATP-dependent conversion of 5-aminoimidazole ribonucleotide (AIR) and HCO(3)(-) to N5-carboxyaminoimidazole ribonucleotide (N5-CAIR). The chain is N5-carboxyaminoimidazole ribonucleotide synthase from Saccharolobus solfataricus (strain ATCC 35092 / DSM 1617 / JCM 11322 / P2) (Sulfolobus solfataricus).